The primary structure comprises 39 residues: MSDFTKFLTTAPVAFILFSSFVFALFIEINRFFPDILTF.

Residues 7–27 (FLTTAPVAFILFSSFVFALFI) form a helical membrane-spanning segment.

This sequence belongs to the PsaJ family.

It is found in the cellular thylakoid membrane. Functionally, may help in the organization of the PsaE and PsaF subunits. The sequence is that of Photosystem I reaction center subunit IX from Synechococcus sp. (strain JA-3-3Ab) (Cyanobacteria bacterium Yellowstone A-Prime).